A 348-amino-acid chain; its full sequence is Ethanol acetyltransferase 2 (348 aa).

The transit peptide at 1–19 directs the protein to the mitochondrion; sequence MIFNSLSIKRLSSTXTSLP. In terms of domain architecture, AB hydrolase-1 spans 49-305; sequence IIFLHGIYGY…VMKERPQEYI (257 aa). Residues S121, D145, and H294 each act as charge relay system in the active site.

This sequence belongs to the AB hydrolase superfamily.

It is found in the mitochondrion. The catalysed reaction is ethanol + acetyl-CoA = ethyl acetate + CoA. It carries out the reaction acetyl-CoA + H2O = acetate + CoA + H(+). The enzyme catalyses ethyl acetate + H2O = ethanol + acetate + H(+). In terms of biological role, alcohol acetyltransferase that catalyzes the synthesis of ethyl acetate from ethanol and acetyl-CoA. Can also function as a thioesterase by hydrolyzing acetyl-CoA in the absence of ethanol, as well as esterase hydrolyzing ethyl acetate. The sequence is that of Ethanol acetyltransferase 2 (EAT2) from Hanseniaspora uvarum (Yeast).